The sequence spans 81 residues: ATP synthase subunit c, chloroplastic (81 aa).

A run of 2 helical transmembrane segments spans residues 3–23 (PLIS…ASIG) and 53–73 (LLLS…VALA).

The protein belongs to the ATPase C chain family. In terms of assembly, F-type ATPases have 2 components, F(1) - the catalytic core - and F(0) - the membrane proton channel. F(1) has five subunits: alpha(3), beta(3), gamma(1), delta(1), epsilon(1). F(0) has four main subunits: a(1), b(1), b'(1) and c(10-14). The alpha and beta chains form an alternating ring which encloses part of the gamma chain. F(1) is attached to F(0) by a central stalk formed by the gamma and epsilon chains, while a peripheral stalk is formed by the delta, b and b' chains.

The protein resides in the plastid. Its subcellular location is the chloroplast thylakoid membrane. In terms of biological role, f(1)F(0) ATP synthase produces ATP from ADP in the presence of a proton or sodium gradient. F-type ATPases consist of two structural domains, F(1) containing the extramembraneous catalytic core and F(0) containing the membrane proton channel, linked together by a central stalk and a peripheral stalk. During catalysis, ATP synthesis in the catalytic domain of F(1) is coupled via a rotary mechanism of the central stalk subunits to proton translocation. Functionally, key component of the F(0) channel; it plays a direct role in translocation across the membrane. A homomeric c-ring of between 10-14 subunits forms the central stalk rotor element with the F(1) delta and epsilon subunits. In Angiopteris evecta (Mule's foot fern), this protein is ATP synthase subunit c, chloroplastic.